A 405-amino-acid polypeptide reads, in one-letter code: MAGVLGMILAGGEGSRLRPLTESRSKPAVPFGGSYRLIDFALNNFVNADLMRIYVLTQFKSQSLFHHMKKGWNINGITDRFIDPIPAQMRTGKRWYEGTADAIYQNLRFMELSEPEQVCIFGSDHIYKMDIKQMLSFHKEKLAALTVSALRMPLAEASQFGVIEVDAEGRMVGFEEKPSAPKSIPGDPDFALVSMGNYIFEADVLFAELIEDADNENSSHDFGKDIIPKMFPRGDVFVYDFSQNRISGEKAEVYWRDVGTIDAYWQAHMDLLKTDAPFSLYNRKWPLHTYQPPLPPATFTDSDNGRVQIIDSLVCNGSYVRGSRIEKSVLGFRSNIASACDISESILLGDVKVGEGCVLRRVIVDKDVDIAPGTQIGVNLQEDKKIFHVSDDGIVVIPKGARVGY.

Residues tyrosine 96, glycine 161, glutamate 176–lysine 177, and serine 194 contribute to the alpha-D-glucose 1-phosphate site.

This sequence belongs to the bacterial/plant glucose-1-phosphate adenylyltransferase family. As to quaternary structure, homotetramer.

It carries out the reaction alpha-D-glucose 1-phosphate + ATP + H(+) = ADP-alpha-D-glucose + diphosphate. The protein operates within glycan biosynthesis; glycogen biosynthesis. Its function is as follows. Involved in the biosynthesis of ADP-glucose, a building block required for the elongation reactions to produce glycogen. Catalyzes the reaction between ATP and alpha-D-glucose 1-phosphate (G1P) to produce pyrophosphate and ADP-Glc. The polypeptide is Glucose-1-phosphate adenylyltransferase 1 (Vibrio vulnificus (strain CMCP6)).